A 932-amino-acid chain; its full sequence is Protein translocase subunit SecA, chloroplastic (932 aa).

95-102 is an ATP binding site; sequence MRTGEGKT. The span at 632–641 shows a compositional bias: basic and acidic residues; sequence HESRRVDNQL. Residues 632-653 are disordered; sequence HESRRVDNQLRGRSGRQGDPGS.

It belongs to the SecA family.

The protein localises to the plastid. The protein resides in the chloroplast stroma. Its subcellular location is the chloroplast thylakoid membrane. The enzyme catalyses ATP + H2O + chloroplast-proteinSide 1 = ADP + phosphate + chloroplast-proteinSide 2.. Functionally, has a central role in coupling the hydrolysis of ATP to the transfer of proteins across the thylakoid membrane. This chain is Protein translocase subunit SecA, chloroplastic, found in Ostreococcus lucimarinus (strain CCE9901).